The sequence spans 595 residues: MVTDNSKATDNSANPNMTQHAVLRELGHKFAGKFTEQFTFDGIPTIWVSRQDLLDVLMYLRTLPKPYVMLLDLSAMDERLRQHRDGLPASDFTVFYHLMSLERNSDIRVKVALSEDDLKVPTATKIWPNANWYEREVWDMFGIVFDGHPHLTRILLPKYWEGHPLRKEYHARATEFTPYFLNNAKQQFEQENLRFVPEEWGMKRSGRDEDFMFLNLGPNHPSAHGAFRLVLQLDGEEVIDCIPDIGYHHRGAEKMAERQTWHSYIPYTDRIDYLGGVMNELPYVMAVEQLAGITVPERAQTIRVMMSEFFRITNNLLYFGTFIQDAGGMTPVFYMFTDRQKAYDVIEAVTGYRMHPAWFRIGGTAADLPRGWQRLVREFLDWMPQRLDEYVKAAMENSVLKGRTQNVAQYDAKQALAWGVTGAGLRATGVEFDLRKARPYMGYENYDFEIPVGYNGDAYDRCMVKIEEIRQSLRIIRQCMDNMPSGPYKADHPLAVPPPKNRTLNDIETLINHFISVSWGPVMPAGEASMMVEATKGINSYYITSDRSTMSYRTRIRTPTFAHLQQMPSVINGSLVSDLIIYLASIDIVMADTDR.

Positions 1-186 (MVTDNSKATD…TPYFLNNAKQ (186 aa)) are NADH dehydrogenase I subunit C. Residues 210–595 (DFMFLNLGPN…IDIVMADTDR (386 aa)) form an NADH dehydrogenase I subunit D region.

In the N-terminal section; belongs to the complex I 30 kDa subunit family. It in the C-terminal section; belongs to the complex I 49 kDa subunit family. In terms of assembly, NDH-1 is composed of 13 different subunits. Subunits NuoB, CD, E, F, and G constitute the peripheral sector of the complex.

It localises to the cell inner membrane. It carries out the reaction a quinone + NADH + 5 H(+)(in) = a quinol + NAD(+) + 4 H(+)(out). In terms of biological role, NDH-1 shuttles electrons from NADH, via FMN and iron-sulfur (Fe-S) centers, to quinones in the respiratory chain. The immediate electron acceptor for the enzyme in this species is believed to be ubiquinone. Couples the redox reaction to proton translocation (for every two electrons transferred, four hydrogen ions are translocated across the cytoplasmic membrane), and thus conserves the redox energy in a proton gradient. The sequence is that of NADH-quinone oxidoreductase subunit C/D from Psychrobacter sp. (strain PRwf-1).